The sequence spans 360 residues: MRTLLLTILIFFFTVNPISAKFYTNVSSIPPLQFLNATQNAWETFSKLAGCHIGENINGLSKLKQYFRRFGYITTTGNCTDDFDDVLQSAINTYQKNFNLKVTGKLDSSTLRQIVKPRCGNPDLIDGVSEMNGGKILRTTEKYSFFPGKPRWPKRKRDLTYAFAPQNNLTDEVKRVFSRAFTRWAEVTPLNFTRSESILRADIVIGFFSGEHGDGEPFDGAMGTLAHASSPPTGMLHLDGDEDWLISNGEISRRILPVTTVVDLESVAVHEIGHLLGLGHSSVEDAIMFPAISGGDRKVELAKDDIEGIQHLYGGNPNGDGGGSKPSRESQSTGGDSVRRWRGWMISLSSIATCIFLISV.

The first 20 residues, 1 to 20 (MRTLLLTILIFFFTVNPISA), serve as a signal peptide directing secretion. Positions 21-142 (KFYTNVSSIP…GGKILRTTEK (122 aa)) are cleaved as a propeptide — activation peptide. 3 N-linked (GlcNAc...) asparagine glycosylation sites follow: asparagine 25, asparagine 36, and asparagine 78. A Cysteine switch motif is present at residues 117 to 124 (PRCGNPDL). Cysteine 119 is a binding site for Zn(2+). N-linked (GlcNAc...) asparagine glycans are attached at residues asparagine 168 and asparagine 191. Residue histidine 270 participates in Zn(2+) binding. Residue glutamate 271 is part of the active site. Histidine 274 and histidine 280 together coordinate Zn(2+). Residues 312–336 (LYGGNPNGDGGGSKPSRESQSTGGD) form a disordered region. The GPI-anchor amidated serine moiety is linked to residue serine 337. Positions 338–360 (VRRWRGWMISLSSIATCIFLISV) are cleaved as a propeptide — removed in mature form.

It belongs to the peptidase M10A family. Matrix metalloproteinases (MMPs) subfamily. Zn(2+) is required as a cofactor. As to expression, mostly expressed in leaves, roots and stems, and, to a lower extent, in flowers.

It localises to the cell membrane. Its activity is regulated as follows. Repressed by acetohydroxamic acid (AHA). Its function is as follows. Matrix metalloproteinases (MMPs) or matrixins may play a role in the degradation and remodeling of the extracellular matrix (ECM) during development or in response to stresses. Active on Mca-KESAbuNLFVLKDpaR-NH(2) (QF75) and, to some extent, on McaPLGLDpaAR-NH(2) (QF24), myelin basic protein (MBP) and beta-casein. The polypeptide is Metalloendoproteinase 5-MMP (Arabidopsis thaliana (Mouse-ear cress)).